The sequence spans 249 residues: tRNA (guanine-N(1)-)-methyltransferase (249 aa).

S-adenosyl-L-methionine is bound by residues glycine 113 and 133–138; that span reads LGDFVL.

Belongs to the RNA methyltransferase TrmD family. As to quaternary structure, homodimer.

The protein localises to the cytoplasm. It carries out the reaction guanosine(37) in tRNA + S-adenosyl-L-methionine = N(1)-methylguanosine(37) in tRNA + S-adenosyl-L-homocysteine + H(+). Functionally, specifically methylates guanosine-37 in various tRNAs. The protein is tRNA (guanine-N(1)-)-methyltransferase of Leptothrix cholodnii (strain ATCC 51168 / LMG 8142 / SP-6) (Leptothrix discophora (strain SP-6)).